A 204-amino-acid chain; its full sequence is Ribosomal RNA large subunit methyltransferase E (204 aa).

5 residues coordinate S-adenosyl-L-methionine: glycine 49, tryptophan 51, aspartate 69, asparagine 87, and aspartate 111. Lysine 151 serves as the catalytic Proton acceptor.

It belongs to the class I-like SAM-binding methyltransferase superfamily. RNA methyltransferase RlmE family.

Its subcellular location is the cytoplasm. The enzyme catalyses uridine(2552) in 23S rRNA + S-adenosyl-L-methionine = 2'-O-methyluridine(2552) in 23S rRNA + S-adenosyl-L-homocysteine + H(+). In terms of biological role, specifically methylates the uridine in position 2552 of 23S rRNA at the 2'-O position of the ribose in the fully assembled 50S ribosomal subunit. The sequence is that of Ribosomal RNA large subunit methyltransferase E from Nitratidesulfovibrio vulgaris (strain ATCC 29579 / DSM 644 / CCUG 34227 / NCIMB 8303 / VKM B-1760 / Hildenborough) (Desulfovibrio vulgaris).